We begin with the raw amino-acid sequence, 304 residues long: N-carbamoyl-D-amino acid hydrolase (304 aa).

Positions 5–276 (MILAVGQQGP…DEVITAAVDL (272 aa)) constitute a CN hydrolase domain. Catalysis depends on residues Glu-47, Lys-127, and Cys-172.

In terms of assembly, homotetramer.

It carries out the reaction an N-carbamoyl-D-amino acid + H2O + 2 H(+) = a D-alpha-amino acid + NH4(+) + CO2. Functionally, the enzyme catalyzes the hydrolysis of N-carbamoyl-D-amino acids to the corresponding which are useful intermediates in the preparation of beta-lactam antibiotics. Industrial production of beta-lactam antibiotics is now being developed using this enzyme. The sequence is that of N-carbamoyl-D-amino acid hydrolase from Rhizobium radiobacter (Agrobacterium tumefaciens).